Reading from the N-terminus, the 346-residue chain is Protein RecA (346 aa).

Residue 67–74 participates in ATP binding; sequence GPESSGKT.

This sequence belongs to the RecA family.

Its subcellular location is the cytoplasm. Its function is as follows. Can catalyze the hydrolysis of ATP in the presence of single-stranded DNA, the ATP-dependent uptake of single-stranded DNA by duplex DNA, and the ATP-dependent hybridization of homologous single-stranded DNAs. It interacts with LexA causing its activation and leading to its autocatalytic cleavage. The sequence is that of Protein RecA from Mycobacterium marinum (strain ATCC BAA-535 / M).